A 226-amino-acid chain; its full sequence is Probable N-acetyl-alpha-D-glucosaminyl L-malate deacetylase 2 (226 aa).

Zn(2+)-binding residues include H13, D16, and H127.

The protein belongs to the PIGL family. Zn(2+) is required as a cofactor.

It catalyses the reaction (S)-malyl N-acetyl-alpha-D-glucosaminide + H2O = (S)-malyl alpha-D-glucosaminide + acetate. Functionally, involved in bacillithiol (BSH) biosynthesis. Catalyzes the second step of the pathway, the deacetylation of N-acetylglucosaminylmalate (GlcNAc-Mal) to glucosamine malate (GlcN-Mal). Could also be involved in bacillithiol-detoxifying pathways through formation of S-mercapturic adducts. The protein is Probable N-acetyl-alpha-D-glucosaminyl L-malate deacetylase 2 of Bacillus anthracis.